The primary structure comprises 786 residues: Diamine oxidase [copper-containing] 1, peroxisomal (786 aa).

A substrate-binding site is contributed by 419-430 (AFDAGEDGLGKN). Aspartate 421 serves as the catalytic Proton acceptor. A disulfide bridge connects residues cysteine 440 and cysteine 466. 502–507 (VANYEY) contacts substrate. Tyrosine 505 functions as the Schiff-base intermediate with substrate; via topaquinone in the catalytic mechanism. 2',4',5'-topaquinone is present on tyrosine 505. Positions 555 and 557 each coordinate Cu cation. The Mn(2+) site is built by aspartate 710 and isoleucine 711. Histidine 721 contributes to the Cu cation binding site.

Belongs to the copper/topaquinone oxidase family. As to quaternary structure, homodimer. Requires Cu cation as cofactor. Zn(2+) serves as cofactor. The cofactor is L-topaquinone. Post-translationally, topaquinone (TPQ) is generated by copper-dependent autoxidation of a specific tyrosyl residue. In terms of tissue distribution, mainly expressed in roots, and, to a lower extent, in leaves and stems.

It is found in the peroxisome. The enzyme catalyses a primary methyl amine + O2 + H2O = an aldehyde + H2O2 + NH4(+). It catalyses the reaction N-methylputrescine + O2 + H2O = 4-methylaminobutanal + H2O2 + NH4(+). The protein operates within alkaloid biosynthesis; nicotine biosynthesis. Its pathway is amine and polyamine degradation; putrescine degradation. Its function is as follows. Involved in putrescine catabolism in peroxisomes. May also be involved in the biosynthesis of pyridine alkaloid natural products, leading mainly to the production of anabasine, anatabine, nicotine and nornicotine, effective deterrents against herbivores with antiparasitic and pesticide properties (neurotoxins); nornicotine serves as the precursor in the synthesis of the carcinogen compound N'-nitrosonornicotine (NNN). Oxidizes preferentially non-N-methylated amines. This chain is Diamine oxidase [copper-containing] 1, peroxisomal, found in Nicotiana tabacum (Common tobacco).